We begin with the raw amino-acid sequence, 339 residues long: Spore coat polysaccharide biosynthesis protein SpsG (339 aa).

The chain crosses the membrane as a helical span at residues 241-261 (IVAGGISLYEAICIGVPCLVL).

This sequence to M.jannaschii MJ1062.

Its subcellular location is the cell membrane. It participates in spore coat biogenesis; spore coat polysaccharide biosynthesis. The chain is Spore coat polysaccharide biosynthesis protein SpsG (spsG) from Bacillus subtilis (strain 168).